Consider the following 620-residue polypeptide: GTP-binding protein At3g49725, chloroplastic (620 aa).

Residues 1–65 (MSVTTSFGIW…SSFLARDRLR (65 aa)) constitute a chloroplast transit peptide. Residues 57-100 (SFLARDRLRSKTPSSSPFSSKRHTPKTSEIEEESTPKDSVLLNP) form a disordered region. One can recognise a Hflx-type G domain in the interval 346 to 585 (GTIAVVGYTN…LIDDKMKEKK (240 aa)). GTP is bound by residues 352–359 (GYTNAGKS), 377–381 (FATLD), 399–402 (DTVG), and 468–471 (NKID). Mg(2+) contacts are provided by Ser359 and Thr379. Acidic residues-rich tracts occupy residues 478–497 (EEEK…EDEA) and 511–521 (TVDEDQIQNGD). The interval 478 to 521 (EEEKYLDDGEGVGEEDEDEADLKAEETVDASEATVDEDQIQNGD) is disordered. 563–565 (SAL) is a binding site for GTP. The interval 597–620 (LHKRKWRPPRNDDEEERLIPLDQR) is disordered.

It belongs to the TRAFAC class OBG-HflX-like GTPase superfamily. HflX GTPase family. Mg(2+) serves as cofactor.

The protein localises to the plastid. It is found in the chloroplast. The polypeptide is GTP-binding protein At3g49725, chloroplastic (Arabidopsis thaliana (Mouse-ear cress)).